The primary structure comprises 154 residues: MAKQEQNIVYLYCDGACRGNPGPGGWGVLLRYNQHERQLHGGVANTTNNQMELTAAIEGLKSLKKPCQVVVTTDSQYLRRGITEWLPVWKRRGWRTSNKKPVKNQPLWETLEREVERHTIVWHWVKGHSGHAENEIADELANRGIDEVLKRGVQ.

The RNase H type-1 domain occupies 5–146 (EQNIVYLYCD…ADELANRGID (142 aa)). Residues Asp14, Glu52, Asp74, and Asp138 each coordinate Mg(2+).

Belongs to the RNase H family. In terms of assembly, monomer. Requires Mg(2+) as cofactor.

It is found in the cytoplasm. The catalysed reaction is Endonucleolytic cleavage to 5'-phosphomonoester.. Its function is as follows. Endonuclease that specifically degrades the RNA of RNA-DNA hybrids. The polypeptide is Ribonuclease H (Coxiella burnetii (strain RSA 331 / Henzerling II)).